We begin with the raw amino-acid sequence, 189 residues long: Photosystem I assembly protein Ycf4 (189 aa).

A run of 2 helical transmembrane segments spans residues 31-51 (TVIL…YFGF) and 70-90 (VMSF…LTII).

Belongs to the Ycf4 family.

The protein localises to the plastid. The protein resides in the chloroplast thylakoid membrane. In terms of biological role, seems to be required for the assembly of the photosystem I complex. This is Photosystem I assembly protein Ycf4 from Chlorokybus atmophyticus (Soil alga).